The following is a 1045-amino-acid chain: Cation efflux system protein CusA (1045 aa).

Transmembrane regions (helical) follow at residues 14–34 (FLVL…IINT), 336–356 (LSGK…LFLW), 361–381 (ALVA…VMHF), 388–408 (IMSL…AIVM), 444–464 (VGPA…PIFT), 483–503 (AMAG…GYWI), 530–550 (VLHW…TVLW), 869–889 (KLKL…YLAF), 896–916 (LLII…LWWM), 926–946 (TGFI…LMYL), 983–1003 (AMTV…TGAG), and 1010–1030 (IAAP…FIIP).

The protein belongs to the resistance-nodulation-cell division (RND) (TC 2.A.6) family. In terms of assembly, the cus efflux system is composed of CusA, CusB, CusC and CusF.

It localises to the cell inner membrane. Functionally, part of a cation efflux system that mediates resistance to copper and silver. This chain is Cation efflux system protein CusA (cusA), found in Escherichia coli O157:H7.